Reading from the N-terminus, the 73-residue chain is MAKKDGAIEIEGTVIESLPNAMFRVELDNGHKVLAHISGKMRMHYIRILPDDRVVVELSPYDLTRGRIVYRYK.

In terms of domain architecture, S1-like spans Met-1–Lys-73.

Belongs to the IF-1 family. As to quaternary structure, component of the 30S ribosomal translation pre-initiation complex which assembles on the 30S ribosome in the order IF-2 and IF-3, IF-1 and N-formylmethionyl-tRNA(fMet); mRNA recruitment can occur at any time during PIC assembly.

The protein resides in the cytoplasm. In terms of biological role, one of the essential components for the initiation of protein synthesis. Stabilizes the binding of IF-2 and IF-3 on the 30S subunit to which N-formylmethionyl-tRNA(fMet) subsequently binds. Helps modulate mRNA selection, yielding the 30S pre-initiation complex (PIC). Upon addition of the 50S ribosomal subunit IF-1, IF-2 and IF-3 are released leaving the mature 70S translation initiation complex. The chain is Translation initiation factor IF-1 from Thermobifida fusca (strain YX).